We begin with the raw amino-acid sequence, 55 residues long: Potassium channel toxin alpha-KTX 12 Sp2 (55 aa).

The N-terminal stretch at 1-18 (MRLAIILLLMTTIVLTIG) is a signal peptide. 3 cysteine pairs are disulfide-bonded: Cys-26-Cys-46, Cys-32-Cys-51, and Cys-36-Cys-53.

Belongs to the short scorpion toxin superfamily. Potassium channel inhibitor family. Alpha-KTx 12 subfamily. In terms of tissue distribution, expressed by the venom gland.

The protein localises to the secreted. Its function is as follows. Blocks mouse voltage-gated potassium channels Kv1.3/KCNA3 (IC(50)=0.3-30 nM), when the channel is expressed in Jurkat T cells or in HEK293 cells. Also shows a weaker inhibition on mKv1.2/KCNA2 (IC(50)=56.9 nM) and mKv1.1/KCNA1 (IC(50)=485 nM). Probably through the inhibition of both Kv1.2/KCNA2 and Kv1.3/KCNA3, the toxin also reduces the free calcium concentration in Jurkat T cells, inhibits the activation of Jurkat T cells and reduces the release of inflammatory cytokines interleukin-2, showing a strong immunosuppressant effect. In Scorpiops pococki (Scorpion), this protein is Potassium channel toxin alpha-KTX 12 Sp2.